The chain runs to 542 residues: uncharacterized protein (542 aa).

Transmembrane regions (helical) follow at residues 4-23 (ILRD…GYPL), 28-47 (IGGI…AFGA), 57-79 (IVYQ…HGFL), 86-108 (GVIY…LIPH), and 151-173 (PVVG…IYLA). 2 consecutive RCK C-terminal domains span residues 186 to 270 (RTLK…VIGC) and 273 to 356 (EVQA…LGDS). The next 6 membrane-spanning stretches (helical) occupy residues 365 to 384 (IAVL…VPIP), 389 to 408 (ITVR…FLGA), 415 to 437 (LVWV…IFLA), 457 to 479 (WAIL…YVGY), 484 to 506 (IPMG…LGFA), and 519 to 541 (YAMV…IAVL).

This sequence belongs to the AAE transporter (TC 2.A.81) family.

Its subcellular location is the cell membrane. This is an uncharacterized protein from Symbiobacterium thermophilum (strain DSM 24528 / JCM 14929 / IAM 14863 / T).